A 986-amino-acid chain; its full sequence is DNA polymerase I (986 aa).

Positions 1 to 303 constitute a 5'-3' exonuclease domain; it reads MFMSAKSPLL…RTFIDKIQAF (303 aa). The region spanning 304 to 592 is the 3'-5' exonuclease domain; it reads HRNFSDNQSP…MEDRGIRIDC (289 aa). The tract at residues 308-327 is disordered; the sequence is SDNQSPVPMGNEADNGEPKK. The polymerase stretch occupies residues 593 to 986; that stretch reads DYLQTLSQQL…HRGSNWMEAK (394 aa).

It belongs to the DNA polymerase type-A family. In terms of assembly, single-chain monomer with multiple functions.

It catalyses the reaction DNA(n) + a 2'-deoxyribonucleoside 5'-triphosphate = DNA(n+1) + diphosphate. Its function is as follows. In addition to polymerase activity, this DNA polymerase exhibits 3'-5' and 5'-3' exonuclease activity. The polypeptide is DNA polymerase I (polA) (Synechocystis sp. (strain ATCC 27184 / PCC 6803 / Kazusa)).